Here is a 144-residue protein sequence, read N- to C-terminus: 3-hydroxyacyl-[acyl-carrier-protein] dehydratase FabZ (144 aa).

His51 is a catalytic residue.

This sequence belongs to the thioester dehydratase family. FabZ subfamily.

It is found in the cytoplasm. The enzyme catalyses a (3R)-hydroxyacyl-[ACP] = a (2E)-enoyl-[ACP] + H2O. Functionally, involved in unsaturated fatty acids biosynthesis. Catalyzes the dehydration of short chain beta-hydroxyacyl-ACPs and long chain saturated and unsaturated beta-hydroxyacyl-ACPs. In Clostridium botulinum (strain 657 / Type Ba4), this protein is 3-hydroxyacyl-[acyl-carrier-protein] dehydratase FabZ.